The chain runs to 55 residues: Putative virulence-regulating protein PA2146 (55 aa).

A disordered region spans residues Met-1–Asn-55. Basic and acidic residues-rich tracts occupy residues Phe-11 to Lys-23 and Asp-36 to Lys-45.

It belongs to the con-10 family.

Functionally, may be involved in the regulation of the production of pyocyanine, one of the major virulence factors secreted by P.aeruginosa, and other virulence factors. This chain is Putative virulence-regulating protein PA2146, found in Pseudomonas aeruginosa (strain ATCC 15692 / DSM 22644 / CIP 104116 / JCM 14847 / LMG 12228 / 1C / PRS 101 / PAO1).